Consider the following 876-residue polypeptide: Phosphoenolpyruvate carboxylase (876 aa).

Active-site residues include His-138 and Lys-544.

The protein belongs to the PEPCase type 1 family. Mg(2+) is required as a cofactor.

It catalyses the reaction oxaloacetate + phosphate = phosphoenolpyruvate + hydrogencarbonate. Its function is as follows. Forms oxaloacetate, a four-carbon dicarboxylic acid source for the tricarboxylic acid cycle. This chain is Phosphoenolpyruvate carboxylase, found in Marinomonas sp. (strain MWYL1).